The sequence spans 499 residues: uncharacterized protein (499 aa).

Residues 10 to 57 form an RING-type; degenerate zinc finger; that stretch reads CGICGQEYSEDEKLLIPRILTECGHTICTGCAGKIKGQSSIIACPFDR. A B box-type; degenerate zinc finger spans residues 101-147; it reads NKNGVCDENTNHHASNYCETCDADLCEECWTWIHSISTLAHHEKKMI.

This is an uncharacterized protein from Caenorhabditis elegans.